A 272-amino-acid polypeptide reads, in one-letter code: MARLAAFDMDGTLLMPDHHLGEKTLSTLARLRERDITLTFATGRHALEMQHILGALSLDAYLITGNGTRVHSLEGELLHRDDLPADVAELVLYQQWDTRASMHIFNDDGWFTGKENPALLQAFVYSGFRYQIIDVKKMPLGSVTKICFCGDHDDLTRLQIQLYEALGERAHLCFSATDCLEVLPVGCNKGAALTVLTQHLGLSLRDCMAFGDAMNDREMLGSVGSGFIMGNAMPQLRAELPHLPVIGHCRNQAVSHYLTHWLDYPHLPYSPE.

Asp-8 serves as the catalytic Nucleophile. Positions 8, 10, and 212 each coordinate Mg(2+).

The protein belongs to the HAD-like hydrolase superfamily. Cof family. Requires Mg(2+) as cofactor.

It catalyses the reaction 4-amino-2-methyl-5-(diphosphooxymethyl)pyrimidine + H2O = 4-amino-2-methyl-5-(phosphooxymethyl)pyrimidine + phosphate + H(+). Catalyzes the hydrolysis of 4-amino-2-methyl-5-hydroxymethylpyrimidine pyrophosphate (HMP-PP) to 4-amino-2-methyl-5-hydroxymethylpyrimidine phosphate (HMP-P). The protein is HMP-PP phosphatase of Escherichia coli O6:H1 (strain CFT073 / ATCC 700928 / UPEC).